A 1041-amino-acid polypeptide reads, in one-letter code: Serine-repeat antigen protein 6 (1041 aa).

The N-terminal stretch at Met1–Gly34 is a signal peptide. Asn84 carries N-linked (GlcNAc...) asparagine glycosylation. Low complexity predominate over residues Lys101 to Gly111. Residues Lys101–Lys173 are disordered. Positions Val114–Met149 are enriched in polar residues. Residue Asn130 is glycosylated (N-linked (GlcNAc...) asparagine). The span at Ser150–Ser168 shows a compositional bias: low complexity. The N-linked (GlcNAc...) asparagine glycan is linked to Asn459. Residues Thr500–Asp577 form a disordered region. The span at Pro502 to Ser515 shows a compositional bias: low complexity. Over residues Asn521–Lys545 the composition is skewed to basic and acidic residues. Asn554 is a glycosylation site (N-linked (GlcNAc...) asparagine). Residues Asn564 to Tyr574 are compositionally biased toward low complexity. A glycan (N-linked (GlcNAc...) asparagine) is linked at Asn583. Residue Cys654 is part of the active site. Asn684 is a glycosylation site (N-linked (GlcNAc...) asparagine). Residues His820 and Asn845 contribute to the active site. Asn984 carries an N-linked (GlcNAc...) asparagine glycan.

This sequence belongs to the peptidase C1 family. Just prior to merozoite egress from host erythrocytes, proteolytically cleaved by SUB1 to generate the active 75kDa form.

The protein resides in the parasitophorous vacuole lumen. The protein localises to the parasitophorous vacuole membrane. Its function is as follows. Cysteine protease which plays an essential role in merozoite egress from host erythrocytes. May cleave host SPTB/beta spectrin and ANK1/ankyrin-1 which disrupts host erythrocyte actin cytoskeleton and leads to host erythrocyte cell membrane rupture. This chain is Serine-repeat antigen protein 6, found in Plasmodium falciparum.